A 433-amino-acid chain; its full sequence is Polygalacturonase ADPG2 (433 aa).

A signal peptide spans 1–24; it reads MARCTNLVTVFLLWALLMFSWCKA. PbH1 repeat units lie at residues 223–249, 250–271, 273–293, 303–324, and 332–353; these read CSNVQVSNVVVTAPADSPNTDGIHITN, TQNIRVSESIIGTGDDCISIES, SQNVQINDITCGPGHGISIGS, VSGVTVDGAKLSGTDNGVRIKT, and ASNIIFQNIQMDNVKNPIIIDQ. The active-site Proton donor is Asp-264. His-287 is a catalytic residue.

Belongs to the glycosyl hydrolase 28 family. In terms of tissue distribution, expressed in roots and in the abscission zone of the sepals, petals and stamens of flowers, at the base of cauline leaves and in the basal cell of trichomes from senescing leaves. Found at the site of lateral root emergence, in the dehiscence zone of anthers and maturing siliques. Also expressed early in anther development, at the time of microspore separation. Expressed in germinating seeds, at the point at which the radicle broke through the seed coat. Not expressed at the junction between the seed and the funiculus or in the dehiscence zone of anthers or pods.

The protein localises to the secreted. The protein resides in the cell wall. The catalysed reaction is (1,4-alpha-D-galacturonosyl)n+m + H2O = (1,4-alpha-D-galacturonosyl)n + (1,4-alpha-D-galacturonosyl)m.. In terms of biological role, polygalacturonase involved in cell separation in the final stages of pod shatter, in anther dehiscence and in floral organ abscission. The polypeptide is Polygalacturonase ADPG2 (ADPG2) (Arabidopsis thaliana (Mouse-ear cress)).